The primary structure comprises 245 residues: Uracil-DNA glycosylase (245 aa).

Residue Asp82 is the Proton acceptor of the active site.

This sequence belongs to the uracil-DNA glycosylase (UDG) superfamily. UNG family.

The protein resides in the cytoplasm. The catalysed reaction is Hydrolyzes single-stranded DNA or mismatched double-stranded DNA and polynucleotides, releasing free uracil.. In terms of biological role, excises uracil residues from the DNA which can arise as a result of misincorporation of dUMP residues by DNA polymerase or due to deamination of cytosine. The protein is Uracil-DNA glycosylase of Deinococcus geothermalis (strain DSM 11300 / CIP 105573 / AG-3a).